A 626-amino-acid polypeptide reads, in one-letter code: Hemocyanin AA6 chain (626 aa).

Residues histidine 170, histidine 174, histidine 201, histidine 321, histidine 325, and histidine 361 each contribute to the Cu cation site. A Phosphoserine modification is found at serine 374.

Belongs to the tyrosinase family. Hemocyanin subfamily. In terms of assembly, scorpion hemocyanin is a 24-chain polymer with 8 different chains identified, assembled in hexameric substructures. Post-translationally, three disulfide bonds are present. In terms of tissue distribution, hemolymph.

The protein localises to the secreted. The protein resides in the extracellular space. Hemocyanins are copper-containing oxygen carriers occurring freely dissolved in the hemolymph of many mollusks and arthropods. This Androctonus australis (Sahara scorpion) protein is Hemocyanin AA6 chain.